We begin with the raw amino-acid sequence, 250 residues long: 2,3-bisphosphoglycerate-dependent phosphoglycerate mutase (250 aa).

Substrate-binding positions include 8 to 15 (RHGESKWN), 21 to 22 (TG), Arg60, 87 to 90 (ERHY), Lys98, 114 to 115 (RR), and 183 to 184 (GN). His9 serves as the catalytic Tele-phosphohistidine intermediate. Catalysis depends on Glu87, which acts as the Proton donor/acceptor.

Belongs to the phosphoglycerate mutase family. BPG-dependent PGAM subfamily.

It carries out the reaction (2R)-2-phosphoglycerate = (2R)-3-phosphoglycerate. It participates in carbohydrate degradation; glycolysis; pyruvate from D-glyceraldehyde 3-phosphate: step 3/5. In terms of biological role, catalyzes the interconversion of 2-phosphoglycerate and 3-phosphoglycerate. The sequence is that of 2,3-bisphosphoglycerate-dependent phosphoglycerate mutase from Borrelia recurrentis (strain A1).